Consider the following 299-residue polypeptide: ATP phosphoribosyltransferase (299 aa).

This sequence belongs to the ATP phosphoribosyltransferase family. Long subfamily. In terms of assembly, equilibrium between an active dimeric form, an inactive hexameric form and higher aggregates. Interconversion between the various forms is largely reversible and is influenced by the natural substrates and inhibitors of the enzyme. Requires Mg(2+) as cofactor.

Its subcellular location is the cytoplasm. It carries out the reaction 1-(5-phospho-beta-D-ribosyl)-ATP + diphosphate = 5-phospho-alpha-D-ribose 1-diphosphate + ATP. It functions in the pathway amino-acid biosynthesis; L-histidine biosynthesis; L-histidine from 5-phospho-alpha-D-ribose 1-diphosphate: step 1/9. Its activity is regulated as follows. Feedback inhibited by histidine. Its function is as follows. Catalyzes the condensation of ATP and 5-phosphoribose 1-diphosphate to form N'-(5'-phosphoribosyl)-ATP (PR-ATP). Has a crucial role in the pathway because the rate of histidine biosynthesis seems to be controlled primarily by regulation of HisG enzymatic activity. This chain is ATP phosphoribosyltransferase, found in Shigella flexneri serotype 5b (strain 8401).